The following is a 478-amino-acid chain: Cytochrome c-552 (478 aa).

The first 27 residues, 1-27 (MKKQWTRRSAAAIAMVTTLLLSSHSFA), serve as a signal peptide directing secretion. Position 91 (His91) interacts with heme c. Residues Cys119, Cys122, and Lys123 each coordinate heme. Positions 157, 160, 161, 206, 209, and 210 each coordinate heme c. Positions 212, 213, 258, and 260 each coordinate Ca(2+). Tyr213 is a binding site for substrate. His261 is a substrate binding site. 9 residues coordinate heme c: His272, Cys279, Cys282, His283, His298, Cys311, Cys314, His315, and His390.

Belongs to the cytochrome c-552 family. The cofactor is Ca(2+). It depends on heme c as a cofactor.

It localises to the periplasm. It catalyses the reaction 6 Fe(III)-[cytochrome c] + NH4(+) + 2 H2O = 6 Fe(II)-[cytochrome c] + nitrite + 8 H(+). It participates in nitrogen metabolism; nitrate reduction (assimilation). Catalyzes the reduction of nitrite to ammonia, consuming six electrons in the process. This Aliivibrio salmonicida (strain LFI1238) (Vibrio salmonicida (strain LFI1238)) protein is Cytochrome c-552.